The sequence spans 239 residues: Ribonuclease HII (239 aa).

In terms of domain architecture, RNase H type-2 spans 30 to 221; the sequence is GPVAGVDEVG…VRRLVTAGTP (192 aa). D36, E37, and D130 together coordinate a divalent metal cation.

This sequence belongs to the RNase HII family. Mn(2+) serves as cofactor. It depends on Mg(2+) as a cofactor.

It is found in the cytoplasm. It carries out the reaction Endonucleolytic cleavage to 5'-phosphomonoester.. In terms of biological role, endonuclease that specifically degrades the RNA of RNA-DNA hybrids. The protein is Ribonuclease HII of Mycobacterium sp. (strain JLS).